Consider the following 479-residue polypeptide: MTDAKRAQKLDLSLDHKVADMSLADYGRKDLQLSEREMPGLMELIRKYGGTKPLKGLKVTGSLHMTIQTAMLIRTLYELGADIRWASCNIFSTQDHAAAAIAASGMAKVFAWKGETLEDYWWCTEMALTWPDGSGPDLLVDDGGDATLFIHKGVEVENDPSLLKKAYDNKEFQIIMDRLALAYEQDPGRWQRVAAKVRGVSEETTTGVHRLYQLEQEGKLLFPAINVNDAVTKSKFDNLYGCRESLADGIKRATDVMVAGKVVVVAGYGDVGKGCAQSMRGFGARVLVTEIDPICALQAAMEGYEVTTMEEAVRTGDIFVTATGNCNVITGAHMEAMKDEAIVCNIGHFDNEIDMHYLENTEGCVCLNIKPQVDKWTLRSGRSIIVLAEGRLVNLGCATGHPSFVMSASFTNQTLAQIELATNPDLERKVYTLPKKLDEEVARLHLDRLGVKLTRLSKDQADYIGVSPEGPFKPDHYRY.

Substrate contacts are provided by Thr-66, Asp-142, and Glu-203. 204–206 (TTT) serves as a coordination point for NAD(+). Substrate contacts are provided by Lys-233 and Asp-237. NAD(+) contacts are provided by residues Asn-238, 267–272 (GYGDVG), Glu-290, Asn-325, 346–348 (IGH), and Asn-394.

The protein belongs to the adenosylhomocysteinase family. Requires NAD(+) as cofactor.

The protein resides in the cytoplasm. It carries out the reaction S-adenosyl-L-homocysteine + H2O = L-homocysteine + adenosine. The protein operates within amino-acid biosynthesis; L-homocysteine biosynthesis; L-homocysteine from S-adenosyl-L-homocysteine: step 1/1. In terms of biological role, may play a key role in the regulation of the intracellular concentration of adenosylhomocysteine. The chain is Adenosylhomocysteinase from Nitratidesulfovibrio vulgaris (strain ATCC 29579 / DSM 644 / CCUG 34227 / NCIMB 8303 / VKM B-1760 / Hildenborough) (Desulfovibrio vulgaris).